A 575-amino-acid chain; its full sequence is Jasmonoyl--L-amino acid synthetase JAR1 (575 aa).

A coiled-coil region spans residues 10-30; it reads MNRVIDEFDEMTRNAHQVQKQ. Ser98 contributes to the ATP binding site. Ser101 provides a ligand contact to jasmonate. ATP-binding positions include Met118, Thr121, Gly163, Asn168, and 331–336; that span reads GSSEGW. 166–170 provides a ligand contact to an L-alpha-amino acid; the sequence is TTNVY. 328-331 contributes to the jasmonate binding site; sequence HDYG. 530–534 contacts an L-alpha-amino acid; that stretch reads KIQEH. Lys557 contributes to the ATP binding site.

The protein belongs to the IAA-amido conjugating enzyme family. As to quaternary structure, interacts with GSTU20/FIP1 under continuous far red (cFR) light; this binding increases its activity and determines the priority of substrate binding.

It localises to the cytoplasm. It carries out the reaction a jasmonate + an L-alpha-amino acid + ATP = a jasmonyl-L-amino acid + AMP + diphosphate + H(+). The catalysed reaction is (+)-7-isojasmonate + L-isoleucine + ATP = L-isoleucine-(+)-7-isojasmonate + AMP + diphosphate + H(+). Its activity is regulated as follows. Activated by GSTU20/FIP1. Its function is as follows. Catalyzes the synthesis of jasmonates-amino acid conjugates by adenylation; can use Ile and, in vitro at least, Val, Leu and Phe as conjugating amino acids on jasmonic acid (JA) and 9,10-dihydro-JA substrates, and to a lower extent, on 3-oxo-2-(2Z-pentenyl)-cyclopentane-1-butyric acid (OPC-4) and 12-hydroxy-JA (12-OH-JA). Can synthesize adenosine 5-tetraphosphate in vitro. Required for the JA-mediated signaling pathway that regulates many developmental and defense mechanisms, including growth root inhibition, vegetative storage proteins (VSPs) accumulation, induced systemic resistance (ISR), response to wounding and herbivores, tolerance to ozone O(3) (probably having a role in lesion containment). Plays an important role in the accumulation of JA-Ile in response to wounding, both locally and systemically; promotes JA responding genes especially in distal part of wounded plants, via the JA-Ile-stimulated degradation of JAZ repressor proteins by the SCF(COI)E3 ubiquitin-protein ligase pathway. Involved in the apoptosis-like programmed cell death (PCD) induced by fungal toxin fumonisin B1-mediated (FB1). Required for volatile compounds (C6-aldehydes and allo-ocimene)-mediated defense activation. Involved in the non-pathogenic rhizobacterium-mediated ISR (defense priming) by P.fluorescens (strains CHAOr and WCS417r) and P.putida LSW17S against infection leaf pathogens such as P.syringae pv. tomato and H.parasitica. Required for the JA-dependent resistance to fungi such as P.irregulare, U.vignae and U.appendiculatus. Necessary to induce systemic resistance against R.solanaceraum and P.syringae pv. tomato with P.oligandrum (a non-pathogenic biocontrol agent) cell wall protein fraction (CWP). Mediates PGIP2 accumulation in response to B.cinerea infection and thus contributes to resistance against this pathogen. Modulates the UV-B alteration of leaves attractiveness to diamondback moths P.xylostella leading to insect oviposition. Involved in the regulation of far-red light influence on development, being an actor of the interplay between light and JA signaling. Seems necessary for the salicylic acid (SA)-mediated, NPR1-independent resistance pathway. May contribute to the chitin-elicited pathway. Contributes to the sensitivity toward F.graminearum. The polypeptide is Jasmonoyl--L-amino acid synthetase JAR1 (Arabidopsis thaliana (Mouse-ear cress)).